The following is a 208-amino-acid chain: Holliday junction branch migration complex subunit RuvA (208 aa).

Residues 1-63 (MIAFVSGPVA…EDSLTLYGFA (63 aa)) form a domain I region. Residues 64 to 142 (NDDERQVFEL…EPVGAHIGQQ (79 aa)) are domain II. Positions 143–147 (GIGTP) are flexible linker. Positions 148-208 (VTSGWRDQLQ…AALQTLNRAR (61 aa)) are domain III.

It belongs to the RuvA family. In terms of assembly, homotetramer. Forms an RuvA(8)-RuvB(12)-Holliday junction (HJ) complex. HJ DNA is sandwiched between 2 RuvA tetramers; dsDNA enters through RuvA and exits via RuvB. An RuvB hexamer assembles on each DNA strand where it exits the tetramer. Each RuvB hexamer is contacted by two RuvA subunits (via domain III) on 2 adjacent RuvB subunits; this complex drives branch migration. In the full resolvosome a probable DNA-RuvA(4)-RuvB(12)-RuvC(2) complex forms which resolves the HJ.

It localises to the cytoplasm. In terms of biological role, the RuvA-RuvB-RuvC complex processes Holliday junction (HJ) DNA during genetic recombination and DNA repair, while the RuvA-RuvB complex plays an important role in the rescue of blocked DNA replication forks via replication fork reversal (RFR). RuvA specifically binds to HJ cruciform DNA, conferring on it an open structure. The RuvB hexamer acts as an ATP-dependent pump, pulling dsDNA into and through the RuvAB complex. HJ branch migration allows RuvC to scan DNA until it finds its consensus sequence, where it cleaves and resolves the cruciform DNA. This chain is Holliday junction branch migration complex subunit RuvA, found in Streptomyces griseus subsp. griseus (strain JCM 4626 / CBS 651.72 / NBRC 13350 / KCC S-0626 / ISP 5235).